Reading from the N-terminus, the 98-residue chain is Large ribosomal subunit protein uL23 (98 aa).

This sequence belongs to the universal ribosomal protein uL23 family. Part of the 50S ribosomal subunit. Contacts protein L29, and trigger factor when it is bound to the ribosome.

In terms of biological role, one of the early assembly proteins it binds 23S rRNA. One of the proteins that surrounds the polypeptide exit tunnel on the outside of the ribosome. Forms the main docking site for trigger factor binding to the ribosome. This is Large ribosomal subunit protein uL23 from Streptococcus pyogenes serotype M1.